Reading from the N-terminus, the 213-residue chain is Pyridoxine/pyridoxamine 5'-phosphate oxidase (213 aa).

FMN is bound by residues 60–65, 75–76, Lys82, and Gln104; these read RMVLMK and YS. Position 65 (Lys65) interacts with substrate. Positions 122 and 126 each coordinate substrate. FMN-binding positions include 139 to 140 and Trp184; that span reads QS. A substrate-binding site is contributed by 190–192; that stretch reads RLH. Arg194 contributes to the FMN binding site.

It belongs to the pyridoxamine 5'-phosphate oxidase family. In terms of assembly, homodimer. FMN is required as a cofactor.

The enzyme catalyses pyridoxamine 5'-phosphate + O2 + H2O = pyridoxal 5'-phosphate + H2O2 + NH4(+). It carries out the reaction pyridoxine 5'-phosphate + O2 = pyridoxal 5'-phosphate + H2O2. It participates in cofactor metabolism; pyridoxal 5'-phosphate salvage; pyridoxal 5'-phosphate from pyridoxamine 5'-phosphate: step 1/1. Its pathway is cofactor metabolism; pyridoxal 5'-phosphate salvage; pyridoxal 5'-phosphate from pyridoxine 5'-phosphate: step 1/1. Its function is as follows. Catalyzes the oxidation of either pyridoxine 5'-phosphate (PNP) or pyridoxamine 5'-phosphate (PMP) into pyridoxal 5'-phosphate (PLP). The polypeptide is Pyridoxine/pyridoxamine 5'-phosphate oxidase (Rhodopseudomonas palustris (strain BisA53)).